Reading from the N-terminus, the 130-residue chain is Small ribosomal subunit protein uS9 (130 aa).

It belongs to the universal ribosomal protein uS9 family.

This is Small ribosomal subunit protein uS9 from Geobacillus sp. (strain WCH70).